The chain runs to 536 residues: Lysosomal acid glucosylceramidase (536 aa).

Positions 1-39 (MELSSPSREECPRPQGRVGIMAASLMGLLLLQAASWASG) are cleaved as a signal peptide. Cystine bridges form between Cys-43/Cys-55 and Cys-57/Cys-62. 3 N-linked (GlcNAc...) asparagine glycosylation sites follow: Asn-58, Asn-98, and Asn-185. Glu-274 functions as the Proton donor in the catalytic mechanism. Asn-309 carries N-linked (GlcNAc...) asparagine glycosylation. The Nucleophile role is filled by Glu-379. An N-linked (GlcNAc...) asparagine glycan is attached at Asn-501.

It belongs to the glycosyl hydrolase 30 family. In terms of assembly, interacts with saposin-C. Interacts with SCARB2. Interacts with TCP1. Interacts with GRN; this interaction prevents aggregation of GBA1-SCARB2 complex via interaction with HSPA1A upon stress.

It localises to the lysosome membrane. The enzyme catalyses a beta-D-glucosyl-(1&lt;-&gt;1')-N-acylsphing-4-enine + H2O = an N-acylsphing-4-enine + D-glucose. It catalyses the reaction a beta-D-galactosyl-(1&lt;-&gt;1')-N-acylsphing-4-enine + H2O = an N-acylsphing-4-enine + D-galactose. It carries out the reaction cholesteryl 3-beta-D-glucoside + H2O = cholesterol + D-glucose. The catalysed reaction is a beta-D-glucosyl-(1&lt;-&gt;1')-N-acylsphing-4-enine + cholesterol = cholesteryl 3-beta-D-glucoside + an N-acylsphing-4-enine. The enzyme catalyses beta-D-glucosyl-N-(9Z-octadecenoyl)-sphing-4E-enine + cholesterol = N-(9Z-octadecenoyl)-sphing-4-enine + cholesteryl 3-beta-D-glucoside. It catalyses the reaction beta-D-glucosyl-N-octanoylsphing-4E-enine + cholesterol = N-octanoylsphing-4-enine + cholesteryl 3-beta-D-glucoside. It carries out the reaction beta-D-glucosyl-N-dodecanoylsphing-4-enine + cholesterol = N-dodecanoylsphing-4-enine + cholesteryl 3-beta-D-glucoside. The catalysed reaction is beta-D-glucosyl-(1&lt;-&gt;1)-N-octadecanoylsphing-4-enine + cholesterol = N-octadecanoylsphing-4-enine + cholesteryl 3-beta-D-glucoside. The enzyme catalyses beta-D-glucosyl-(1&lt;-&gt;1')-N-(15Z-tetracosenoyl)-sphing-4-enine + cholesterol = N-(15Z-tetracosenoyl)-sphing-4-enine + cholesteryl 3-beta-D-glucoside. It catalyses the reaction a beta-D-galactosyl-(1&lt;-&gt;1')-N-acylsphing-4-enine + cholesterol = cholesteryl 3-beta-D-galactoside + an N-acylsphing-4-enine. It carries out the reaction 1-(beta-D-galactosyl)-N-dodecanoylsphing-4-enine + cholesterol = cholesteryl 3-beta-D-galactoside + N-dodecanoylsphing-4-enine. The catalysed reaction is a beta-D-xylosyl-(1&lt;-&gt;1')-N-acylsphing-4-enine + cholesterol = cholesteryl 3-beta-D-xyloside + an N-acylsphing-4-enine. The enzyme catalyses beta-D-xylosyl-(1&lt;-&gt;1')-N-(9Z-octadecenoyl)-sphing-4-enine + cholesterol = cholesteryl 3-beta-D-xyloside + N-(9Z-octadecenoyl)-sphing-4-enine. Its pathway is steroid metabolism; cholesterol metabolism. It functions in the pathway sphingolipid metabolism. In terms of biological role, glucosylceramidase that catalyzes, within the lysosomal compartment, the hydrolysis of glucosylceramides/GlcCers (such as beta-D-glucosyl-(1&lt;-&gt;1')-N-acylsphing-4-enine) into free ceramides (such as N-acylsphing-4-enine) and glucose. Plays a central role in the degradation of complex lipids and the turnover of cellular membranes. Through the production of ceramides, participates in the PKC-activated salvage pathway of ceramide formation. Catalyzes the glucosylation of cholesterol, through a transglucosylation reaction where glucose is transferred from GlcCer to cholesterol. GlcCer containing mono-unsaturated fatty acids (such as beta-D-glucosyl-N-(9Z-octadecenoyl)-sphing-4-enine) are preferred as glucose donors for cholesterol glucosylation when compared with GlcCer containing same chain length of saturated fatty acids (such as beta-D-glucosyl-N-octadecanoyl-sphing-4-enine). Under specific conditions, may alternatively catalyze the reverse reaction, transferring glucose from cholesteryl 3-beta-D-glucoside to ceramide. Can also hydrolyze cholesteryl 3-beta-D-glucoside producing glucose and cholesterol. Catalyzes the hydrolysis of galactosylceramides/GalCers (such as beta-D-galactosyl-(1&lt;-&gt;1')-N-acylsphing-4-enine), as well as the transfer of galactose between GalCers and cholesterol in vitro, but with lower activity than with GlcCers. Contrary to GlcCer and GalCer, xylosylceramide/XylCer (such as beta-D-xyosyl-(1&lt;-&gt;1')-N-acylsphing-4-enine) is not a good substrate for hydrolysis, however it is a good xylose donor for transxylosylation activity to form cholesteryl 3-beta-D-xyloside. The chain is Lysosomal acid glucosylceramidase (GBA1) from Sus scrofa (Pig).